The primary structure comprises 96 residues: Protein RnfH (96 aa).

This sequence belongs to the UPF0125 (RnfH) family.

In Klebsiella pneumoniae (strain 342), this protein is Protein RnfH.